The chain runs to 205 residues: Glycerol-3-phosphate acyltransferase (205 aa).

5 helical membrane passes run 6 to 26, 55 to 75, 89 to 109, 120 to 140, and 162 to 182; these read STVL…AVVV, KAAI…VWLV, VALV…FRFV, ILLA…LVIA, and ALMF…VLLI.

The protein belongs to the PlsY family. Probably interacts with PlsX.

The protein resides in the cell inner membrane. It catalyses the reaction an acyl phosphate + sn-glycerol 3-phosphate = a 1-acyl-sn-glycero-3-phosphate + phosphate. Its pathway is lipid metabolism; phospholipid metabolism. In terms of biological role, catalyzes the transfer of an acyl group from acyl-phosphate (acyl-PO(4)) to glycerol-3-phosphate (G3P) to form lysophosphatidic acid (LPA). This enzyme utilizes acyl-phosphate as fatty acyl donor, but not acyl-CoA or acyl-ACP. The sequence is that of Glycerol-3-phosphate acyltransferase from Herminiimonas arsenicoxydans.